Consider the following 89-residue polypeptide: Small ribosomal subunit protein uS15 (89 aa).

It belongs to the universal ribosomal protein uS15 family. In terms of assembly, part of the 30S ribosomal subunit. Forms a bridge to the 50S subunit in the 70S ribosome, contacting the 23S rRNA.

In terms of biological role, one of the primary rRNA binding proteins, it binds directly to 16S rRNA where it helps nucleate assembly of the platform of the 30S subunit by binding and bridging several RNA helices of the 16S rRNA. Functionally, forms an intersubunit bridge (bridge B4) with the 23S rRNA of the 50S subunit in the ribosome. This Bartonella henselae (strain ATCC 49882 / DSM 28221 / CCUG 30454 / Houston 1) (Rochalimaea henselae) protein is Small ribosomal subunit protein uS15.